Consider the following 218-residue polypeptide: dTTP/UTP pyrophosphatase (218 aa).

The active-site Proton acceptor is aspartate 69.

This sequence belongs to the Maf family. YhdE subfamily. A divalent metal cation serves as cofactor.

The protein localises to the cytoplasm. The catalysed reaction is dTTP + H2O = dTMP + diphosphate + H(+). It carries out the reaction UTP + H2O = UMP + diphosphate + H(+). Its function is as follows. Nucleoside triphosphate pyrophosphatase that hydrolyzes dTTP and UTP. May have a dual role in cell division arrest and in preventing the incorporation of modified nucleotides into cellular nucleic acids. The polypeptide is dTTP/UTP pyrophosphatase (Thermomicrobium roseum (strain ATCC 27502 / DSM 5159 / P-2)).